We begin with the raw amino-acid sequence, 52 residues long: Large ribosomal subunit protein eL39 (52 aa).

This sequence belongs to the eukaryotic ribosomal protein eL39 family. As to quaternary structure, interacts with YIH1.

This Encephalitozoon cuniculi (strain GB-M1) (Microsporidian parasite) protein is Large ribosomal subunit protein eL39 (RPL39).